We begin with the raw amino-acid sequence, 236 residues long: Small ribosomal subunit protein uS3 (236 aa).

In terms of domain architecture, KH type-2 spans 39–107 (VREFLKKKLA…PVHLNIEEVR (69 aa)). The disordered stretch occupies residues 215-236 (AAQPAEPEKKVRKSGAKNAATS).

Belongs to the universal ribosomal protein uS3 family. Part of the 30S ribosomal subunit. Forms a tight complex with proteins S10 and S14.

In terms of biological role, binds the lower part of the 30S subunit head. Binds mRNA in the 70S ribosome, positioning it for translation. The chain is Small ribosomal subunit protein uS3 from Methylobacillus flagellatus (strain ATCC 51484 / DSM 6875 / VKM B-1610 / KT).